A 338-amino-acid polypeptide reads, in one-letter code: tRNA N6-adenosine threonylcarbamoyltransferase (338 aa).

Fe cation is bound by residues H110 and H114. Residues 132 to 136 (LLSGG), D165, G178, and N274 each bind substrate. Position 298 (D298) interacts with Fe cation.

This sequence belongs to the KAE1 / TsaD family. The cofactor is Fe(2+).

It localises to the cytoplasm. The enzyme catalyses L-threonylcarbamoyladenylate + adenosine(37) in tRNA = N(6)-L-threonylcarbamoyladenosine(37) in tRNA + AMP + H(+). Functionally, required for the formation of a threonylcarbamoyl group on adenosine at position 37 (t(6)A37) in tRNAs that read codons beginning with adenine. Is involved in the transfer of the threonylcarbamoyl moiety of threonylcarbamoyl-AMP (TC-AMP) to the N6 group of A37, together with TsaE and TsaB. TsaD likely plays a direct catalytic role in this reaction. The polypeptide is tRNA N6-adenosine threonylcarbamoyltransferase (Borrelia garinii subsp. bavariensis (strain ATCC BAA-2496 / DSM 23469 / PBi) (Borreliella bavariensis)).